Consider the following 1001-residue polypeptide: E3 ubiquitin-protein ligase etc-1 (1001 aa).

Residues 28 to 57 (QEKAARKVQKFWRGHRVQHNQRLLFRAEFD) form the IQ domain. A coiled-coil region spans residues 66 to 115 (LEETIKMAQLLVNFYETNKDEERLVMTLSELVKLKTSDKEFEKRIRETQR). The 344-residue stretch at 658 to 1001 (KVNDLKSMVR…INSGAGFELA (344 aa)) folds into the HECT domain. The active-site Glycyl thioester intermediate is cysteine 969.

Interacts with ify-1 and cyb-1.

It carries out the reaction S-ubiquitinyl-[E2 ubiquitin-conjugating enzyme]-L-cysteine + [acceptor protein]-L-lysine = [E2 ubiquitin-conjugating enzyme]-L-cysteine + N(6)-ubiquitinyl-[acceptor protein]-L-lysine.. The protein operates within protein modification; protein ubiquitination. Functionally, E3 ubiquitin-protein ligase that accepts ubiquitin from E2 ubiquitin-conjugating enzymes, such as ubc-18, in the form of a thioester and then directly transfers the ubiquitin to targeted substrates. Ubiquitinates ify-1 and cyb-1 targeting them for degradation in post-meiotic embryos. The polypeptide is E3 ubiquitin-protein ligase etc-1 (Caenorhabditis elegans).